A 416-amino-acid chain; its full sequence is MASLGNSGSASSPMVMLAPKTKTKKRHFMQQKVKVFRASDPMLSVFMWGVNHSINDLNQVPVPVMLLPDDFKANTKIKVNNHLFNKENLPSHFEFKEYCPQVFRNLRERFGIEDLDYQASLARSAPMKGDGQGEGLLFTSYDRTLIVKQISSEEVADMHNILSEYHQHIVKCHGSTLLPQFLGMYRITVESEDTYLIVMRNMFSHRLLVHRKYDLKGSLVDREASDKEKVKELPTFKDMDFRNNMQKVYVTEEQKEKMMEKLNRDVEFLVKLKIMDYSLLLGIHDVARGEREEEEAEEPCYEDDADPENGLAPALQVGSYGTSPEGIAGYMNSIKPLGPGEFDPYIDVYAVKSAPGAPQREVYFMGLIDVLTQYDTKKKAAHAAKTVKHGAGAEISTVHPEQYAKRFREFISNIFA.

Residues 38 to 415 (ASDPMLSVFM…RFREFISNIF (378 aa)) enclose the PIPK domain.

Post-translationally, phosphorylated, phosphorylation is induced by EGF.

Its subcellular location is the endoplasmic reticulum. The protein resides in the cytoplasm. It catalyses the reaction a 1,2-diacyl-sn-glycero-3-phospho-(1D-myo-inositol-5-phosphate) + ATP = a 1,2-diacyl-sn-glycero-3-phospho-(1D-myo-inositol-4,5-bisphosphate) + ADP + H(+). The enzyme catalyses 1,2-dihexadecanoyl-sn-glycero-3-phospho-(1D-myo-inositol-5-phosphate) + ATP = 1,2-dihexadecanoyl-sn-glycero-3-phospho-(1D-myo-inositol-4,5-bisphosphate) + ADP + H(+). The catalysed reaction is 1,2-dihexadecanoyl-sn-glycero-3-phospho-(1D-myo-inositol-5-phosphate) + GTP = 1,2-dihexadecanoyl-sn-glycero-3-phospho-(1D-myo-inositol-4,5-bisphosphate) + GDP + H(+). Its function is as follows. Phosphatidylinositol 5-phosphate 4-kinase with low enzymatic activity. May be a GTP sensor, has higher GTP-dependent kinase activity than ATP-dependent kinase activity. This Danio rerio (Zebrafish) protein is Phosphatidylinositol 5-phosphate 4-kinase type-2 gamma (pip4k2c).